A 900-amino-acid chain; its full sequence is Nitrate reductase [NADH] (900 aa).

Cysteine 172 provides a ligand contact to Mo-molybdopterin. One can recognise a Cytochrome b5 heme-binding domain in the interval 521 to 596 (TKMYSLSEVK…LEDYRVGELI (76 aa)). Positions 556 and 579 each coordinate heme. In terms of domain architecture, FAD-binding FR-type spans 644 to 756 (REKIPCKLIS…KGPLGHIEYT (113 aa)). Residues 696–699 (RAYT), 713–717 (VVKVY), phenylalanine 718, phenylalanine 725, 730–732 (AMS), and threonine 783 contribute to the FAD site.

This sequence belongs to the nitrate reductase family. In terms of assembly, homodimer. FAD serves as cofactor. It depends on heme as a cofactor. Mo-molybdopterin is required as a cofactor.

The catalysed reaction is nitrite + NAD(+) + H2O = nitrate + NADH + H(+). Functionally, nitrate reductase is a key enzyme involved in the first step of nitrate assimilation in plants, fungi and bacteria. The polypeptide is Nitrate reductase [NADH] (NIA) (Lotus japonicus (Lotus corniculatus var. japonicus)).